The primary structure comprises 235 residues: Aspartate/glutamate leucyltransferase (235 aa).

The protein belongs to the R-transferase family. Bpt subfamily.

The protein resides in the cytoplasm. The enzyme catalyses N-terminal L-glutamyl-[protein] + L-leucyl-tRNA(Leu) = N-terminal L-leucyl-L-glutamyl-[protein] + tRNA(Leu) + H(+). It carries out the reaction N-terminal L-aspartyl-[protein] + L-leucyl-tRNA(Leu) = N-terminal L-leucyl-L-aspartyl-[protein] + tRNA(Leu) + H(+). Functions in the N-end rule pathway of protein degradation where it conjugates Leu from its aminoacyl-tRNA to the N-termini of proteins containing an N-terminal aspartate or glutamate. The polypeptide is Aspartate/glutamate leucyltransferase (Stutzerimonas stutzeri (strain A1501) (Pseudomonas stutzeri)).